Reading from the N-terminus, the 514-residue chain is Peptide chain release factor 3 (514 aa).

The tr-type G domain maps to 8–268 (KKRRTFAIIS…IFLKFAPEPH (261 aa)). GTP-binding positions include 17–24 (SHPDAGKT), 85–89 (DTPGH), and 139–142 (NKLD).

This sequence belongs to the TRAFAC class translation factor GTPase superfamily. Classic translation factor GTPase family. PrfC subfamily.

Its subcellular location is the cytoplasm. Functionally, increases the formation of ribosomal termination complexes and stimulates activities of RF-1 and RF-2. It binds guanine nucleotides and has strong preference for UGA stop codons. It may interact directly with the ribosome. The stimulation of RF-1 and RF-2 is significantly reduced by GTP and GDP, but not by GMP. This is Peptide chain release factor 3 from Streptococcus pneumoniae (strain 70585).